Consider the following 146-residue polypeptide: Hemoglobin cathodic subunit beta (146 aa).

Positions 2 to 146 constitute a Globin domain; sequence HFSDAERDAI…VAAALSSRYF (145 aa). 2 residues coordinate heme b: histidine 63 and histidine 92.

This sequence belongs to the globin family. In terms of assembly, heterotetramer of two alpha chains and two beta chains. In terms of tissue distribution, red blood cells.

Its function is as follows. Involved in oxygen transport from gills to the various peripheral tissues. The protein is Hemoglobin cathodic subunit beta (hbb) of Hoplosternum littorale (Hassar).